Reading from the N-terminus, the 367-residue chain is MDRIIQSPGKYIQGADVINRLGEYLKPLAERWLVVGDKFVLGFAQSTVEKSFKDAGLVVEIAPFGGECSQNEIDRLRGIAETAQCGAILGIGGGKTLDTAKALAHFMGVPVAIAPTIASTDAPCSALSVIYTDEGEFDRYLLLPNNPNMVIVDTKIVAGAPARLLAAGIGDALATWFEARACSRSGATTMAGGKCTQAALALAELCYNTLLEEGEKAMLAAEQHVVTPALERVIEANTYLSGVGFESGGLAAAHAVHNGLTAIPDAHHYYHGEKVAFGTLTQLVLENAPVEEIETVAALSHAVGLPITLAQLDIKEDVPAKMRIVAEAACAEGETIHNMPGGATPDQVYAALLVADQYGQRFLQEWE.

NAD(+) is bound by residues Asp-37, Gly-94, Lys-95, Thr-116, and Ser-119. Asp-121 is a binding site for glycerol. NAD(+) is bound by residues Ser-125, Leu-127, and Tyr-131. Positions 171, 254, and 271 each coordinate Zn(2+). His-254 lines the glycerol pocket.

The protein belongs to the iron-containing alcohol dehydrogenase family. The cofactor is Zn(2+).

It catalyses the reaction glycerol + NAD(+) = dihydroxyacetone + NADH + H(+). The protein operates within polyol metabolism; glycerol fermentation; glycerone phosphate from glycerol (oxidative route): step 1/2. Functionally, catalyzes the NAD-dependent oxidation of glycerol to dihydroxyacetone (glycerone). Allows microorganisms to utilize glycerol as a source of carbon under anaerobic conditions. This is Glycerol dehydrogenase (gldA) from Escherichia coli O6:H1 (strain CFT073 / ATCC 700928 / UPEC).